A 143-amino-acid chain; its full sequence is Large-conductance mechanosensitive channel (143 aa).

A run of 2 helical transmembrane segments spans residues 16 to 36 (VIDL…VTAL) and 84 to 104 (INTV…VKLI).

The protein belongs to the MscL family. In terms of assembly, homopentamer.

Its subcellular location is the cell inner membrane. Functionally, channel that opens in response to stretch forces in the membrane lipid bilayer. May participate in the regulation of osmotic pressure changes within the cell. The polypeptide is Large-conductance mechanosensitive channel (Xanthomonas axonopodis pv. citri (strain 306)).